The following is a 462-amino-acid chain: Glutamate--tRNA ligase 2 (462 aa).

Residues 8-18 (PSPTGLLHVGG) carry the 'HIGH' region motif. Positions 227–231 (PLSKR) match the 'KMSKS' region motif. K230 serves as a coordination point for ATP.

The protein belongs to the class-I aminoacyl-tRNA synthetase family. Glutamate--tRNA ligase type 1 subfamily. As to quaternary structure, monomer.

The protein localises to the cytoplasm. The catalysed reaction is tRNA(Glu) + L-glutamate + ATP = L-glutamyl-tRNA(Glu) + AMP + diphosphate. In terms of biological role, catalyzes the attachment of glutamate to tRNA(Glu) in a two-step reaction: glutamate is first activated by ATP to form Glu-AMP and then transferred to the acceptor end of tRNA(Glu). The chain is Glutamate--tRNA ligase 2 from Thermosipho melanesiensis (strain DSM 12029 / CIP 104789 / BI429).